A 148-amino-acid chain; its full sequence is Large ribosomal subunit protein uL15 (148 aa).

Basic and acidic residues predominate over residues 1 to 10; it reads MQLHNLEYKK. Residues 1-42 form a disordered region; the sequence is MQLHNLEYKKGSRNHKEKRVGRGHGSGLGKTSGRGQDGQKAR. The segment covering 11 to 22 has biased composition (basic residues); sequence GSRNHKEKRVGR. Gly residues predominate over residues 23 to 36; sequence GHGSGLGKTSGRGQ.

This sequence belongs to the universal ribosomal protein uL15 family. As to quaternary structure, part of the 50S ribosomal subunit.

Its function is as follows. Binds to the 23S rRNA. The chain is Large ribosomal subunit protein uL15 from Ureaplasma parvum serovar 3 (strain ATCC 27815 / 27 / NCTC 11736).